Reading from the N-terminus, the 450-residue chain is Sensor histidine kinase EnvZ (450 aa).

Residues M1–T15 lie on the Cytoplasmic side of the membrane. The helical transmembrane segment at L16 to L35 threads the bilayer. The Periplasmic segment spans residues N36 to S158. A helical transmembrane segment spans residues P159 to I179. The 53-residue stretch at R180–D232 folds into the HAMP domain. Residues R180–A450 are Cytoplasmic-facing. The segment at M223–R289 is cytoplasmic dimerization domain (CDD), when dimerized forms osmosensitive core. Positions G240–V440 constitute a Histidine kinase domain. ATP is bound by residues H243, N347–Y351, D373, R392–G393, and T402–L406. H243 is subject to Phosphohistidine; by autocatalysis.

As to quaternary structure, homodimer. In terms of processing, autophosphorylated.

Its subcellular location is the cell inner membrane. It catalyses the reaction ATP + protein L-histidine = ADP + protein N-phospho-L-histidine.. Member of the two-component regulatory system EnvZ/OmpR involved in regulating expression of the outer membrane porins OmpC and OmpF as well as other genes. Unlike E.coli or S.typhimurium both porins are expressed constitutively. Involved in regulation of the biosynthesis of Vi polysaccharide, a capsular antigen thought to be involved in the virulence of S.typhi. Vi antigen is synthesized at low NaCl concentrations (under 0.4 M). EnvZ functions as a membrane-associated protein kinase that phosphorylates OmpR in response to environmental signals. This Salmonella typhi protein is Sensor histidine kinase EnvZ (envZ).